The following is a 479-amino-acid chain: Cardiolipin synthase A (479 aa).

The next 2 helical transmembrane spans lie at 8–28 and 38–58; these read FFGY…LHAV and IAWA…YLVF. PLD phosphodiesterase domains are found at residues 218–245 and 392–419; these read VNFR…GDEY and QPGF…DNRS. Catalysis depends on residues H223, K225, D230, H397, K399, and D404.

This sequence belongs to the phospholipase D family. Cardiolipin synthase subfamily. ClsA sub-subfamily.

It localises to the cell inner membrane. It carries out the reaction 2 a 1,2-diacyl-sn-glycero-3-phospho-(1'-sn-glycerol) = a cardiolipin + glycerol. In terms of biological role, catalyzes the reversible phosphatidyl group transfer from one phosphatidylglycerol molecule to another to form cardiolipin (CL) (diphosphatidylglycerol) and glycerol. The chain is Cardiolipin synthase A from Pseudomonas putida (strain W619).